We begin with the raw amino-acid sequence, 271 residues long: Solute carrier family 66 member 2 (271 aa).

3 helical membrane passes run 8–28 (WLLVPLHQLVSWGAAAAMVFG), 49–69 (FSTYVCLVLLVANILRILFWF), and 76–96 (PLLWQSAIMILTMLLMLKLCT). The 67-residue stretch at 14–80 (HQLVSWGAAA…RRFESPLLWQ (67 aa)) folds into the PQ-loop 1 domain. Ser-110 carries the post-translational modification Phosphoserine. Helical transmembrane passes span 145–165 (DYVQCVLAFTGVAGYITYLSI), 168–188 (ALFVETLGFLAVLTEAMLGVP), and 232–252 (VCGLLQVLVDLAILGQAYAFA). The 56-residue stretch at 178–233 (AVLTEAMLGVPQLYRNHRHQSTEGMSIKMVLMWTSGDAFKTAYFLLKGAPLQFSVC) folds into the PQ-loop 2 domain.

The protein localises to the membrane. In Homo sapiens (Human), this protein is Solute carrier family 66 member 2.